The primary structure comprises 349 residues: Transmembrane protein 255A (349 aa).

4 consecutive transmembrane segments (helical) span residues 30-50 (IYVT…GLAA), 57-77 (VTVG…LGII), 89-109 (LVAS…CAIV), and 226-246 (TILN…LGGF). The interval 301–329 (VFPSSPPSGLSDEPQSASPSPSYMWSSSA) is disordered. A compositionally biased stretch (low complexity) spans 316–329 (SASPSPSYMWSSSA).

The protein belongs to the TMEM255 family.

Its subcellular location is the membrane. This is Transmembrane protein 255A (TMEM255A) from Macaca fascicularis (Crab-eating macaque).